We begin with the raw amino-acid sequence, 462 residues long: Zinc finger CCCH domain-containing protein 34 (462 aa).

Residues 1-13 (MERYGRPGEEGSR) show a composition bias toward basic and acidic residues. The disordered stretch occupies residues 1 to 26 (MERYGRPGEEGSRSDPSLEWTSHGGE). 3 consecutive C3H1-type zinc fingers follow at residues 54 to 82 (RPDE…HPRD), 100 to 128 (RMGH…HPRQ), and 148 to 176 (RPGE…HPVP). Over residues 288 to 303 (TGTYQSVPSSNSTSKE) the composition is skewed to polar residues. Residues 288 to 310 (TGTYQSVPSSNSTSKEFPQRPDQ) form a disordered region. 2 consecutive C3H1-type zinc fingers follow at residues 307 to 335 (RPDQ…HPVD) and 353 to 381 (RPGV…HSMS). Low complexity predominate over residues 405–418 (SSSLSGSSAPVSSS). A disordered region spans residues 405–462 (SSSLSGSSAPVSSSNEPTKEAVTPAVSSMVSGLSRPEPAETSGDSASVSGSIEAKTSS). The segment covering 446 to 462 (SGDSASVSGSIEAKTSS) has biased composition (polar residues).

It localises to the nucleus. This Arabidopsis thaliana (Mouse-ear cress) protein is Zinc finger CCCH domain-containing protein 34.